A 454-amino-acid chain; its full sequence is Peroxisome assembly protein 10 (454 aa).

Residues 1–23 are Peroxisomal matrix-facing; that stretch reads MATQPPPARPPPPLTSSPYPYAA. A helical transmembrane segment spans residues 24-53; that stretch reads APDIIRAHQKDAYFQGVLANRLSDLHRRLR. A topological domain (cytoplasmic) is located at residue Gly-54. The chain crosses the membrane as a helical span at residues 55–76; it reads ARSAHAWAAETRTFAAALYLCL. Residues 77–132 lie on the Peroxisomal matrix side of the membrane; that stretch reads TTLLGNRTLGEEYCDLVQVEEAPSKLFASSSSKAADDHIYENGLGGGGDGGPLLPS. A helical transmembrane segment spans residues 133 to 165; that stretch reads LPRRAGYILTAIVLPHLASRALPSVRSAIRKRL. Over 166–201 the chain is Cytoplasmic; that stretch reads QSRLATLSRRRQQTGTKSGSGRGGRGGGGGITEYRV. The disordered stretch occupies residues 171-194; it reads TLSRRRQQTGTKSGSGRGGRGGGG. The segment covering 183-194 has biased composition (gly residues); sequence SGSGRGGRGGGG. The chain crosses the membrane as a helical span at residues 202-229; sequence LRYLLTHLTPLTSGAHFRAATLAVFYFT. At 230–276 the chain is on the peroxisomal matrix side; sequence GAYYELSKWVWGLRYVFTTRAGRVVDDDHNRHHHSPQHGGGNGGRAG. The helical transmembrane segment at 277–296 threads the bilayer; sequence YEVLGVLLVVQMAVRAWLHV. The Cytoplasmic segment spans residues 297–454; sequence REQLSSGSVA…VQHILPLRAA (158 aa). Residues 302-329 form a disordered region; it reads SGSVAGGGGEEEEDGEDGFRERTAFGPG. 8 residues coordinate Zn(2+): Cys-402, Cys-405, Cys-417, His-419, Cys-422, Cys-425, Cys-436, and Cys-439. The RING-type zinc finger occupies 402–440; it reads CTLCLEELKDPAATQCGHVFCWACIGDWVREKPECPLCR.

Belongs to the pex2/pex10/pex12 family. In terms of assembly, component of the PEX2-PEX10-PEX12 retrotranslocation channel, composed of PEX2, PEX10 and PEX12.

Its subcellular location is the peroxisome membrane. The catalysed reaction is S-ubiquitinyl-[E2 ubiquitin-conjugating enzyme]-L-cysteine + [acceptor protein]-L-lysine = [E2 ubiquitin-conjugating enzyme]-L-cysteine + N(6)-ubiquitinyl-[acceptor protein]-L-lysine.. It participates in protein modification; protein ubiquitination. Its activity is regulated as follows. The E3 ubiquitin-protein ligase activity is stimulated by PEX12. In terms of biological role, E3 ubiquitin-protein ligase component of a retrotranslocation channel required for peroxisome organization by mediating export of the PEX5 receptor from peroxisomes to the cytosol, thereby promoting PEX5 recycling. The retrotranslocation channel is composed of PEX2, PEX10 and PEX12; each subunit contributing transmembrane segments that coassemble into an open channel that specifically allows the passage of PEX5 through the peroxisomal membrane. PEX10 also regulates PEX5 recycling by acting as a E3 ubiquitin-protein ligase. When PEX5 recycling is compromised, PEX10 catalyzes polyubiquitination of PEX5 during its passage through the retrotranslocation channel, leading to its degradation. The polypeptide is Peroxisome assembly protein 10 (Thermothelomyces thermophilus (strain ATCC 42464 / BCRC 31852 / DSM 1799) (Sporotrichum thermophile)).